Here is a 502-residue protein sequence, read N- to C-terminus: Probable cytosol aminopeptidase (502 aa).

Mn(2+) contacts are provided by K269 and D274. K281 is a catalytic residue. Positions 292, 351, and 353 each coordinate Mn(2+). Residue R355 is part of the active site.

The protein belongs to the peptidase M17 family. It depends on Mn(2+) as a cofactor.

Its subcellular location is the cytoplasm. It catalyses the reaction Release of an N-terminal amino acid, Xaa-|-Yaa-, in which Xaa is preferably Leu, but may be other amino acids including Pro although not Arg or Lys, and Yaa may be Pro. Amino acid amides and methyl esters are also readily hydrolyzed, but rates on arylamides are exceedingly low.. The enzyme catalyses Release of an N-terminal amino acid, preferentially leucine, but not glutamic or aspartic acids.. Its function is as follows. Presumably involved in the processing and regular turnover of intracellular proteins. Catalyzes the removal of unsubstituted N-terminal amino acids from various peptides. The protein is Probable cytosol aminopeptidase of Shewanella loihica (strain ATCC BAA-1088 / PV-4).